We begin with the raw amino-acid sequence, 94 residues long: Co-chaperonin GroES (94 aa).

Belongs to the GroES chaperonin family. In terms of assembly, heptamer of 7 subunits arranged in a ring. Interacts with the chaperonin GroEL.

The protein resides in the cytoplasm. Together with the chaperonin GroEL, plays an essential role in assisting protein folding. The GroEL-GroES system forms a nano-cage that allows encapsulation of the non-native substrate proteins and provides a physical environment optimized to promote and accelerate protein folding. GroES binds to the apical surface of the GroEL ring, thereby capping the opening of the GroEL channel. In Ehrlichia canis (strain Jake), this protein is Co-chaperonin GroES.